Here is a 419-residue protein sequence, read N- to C-terminus: Serine hydroxymethyltransferase (419 aa).

(6S)-5,6,7,8-tetrahydrofolate is bound by residues Leu121 and 125-127 (GHL). N6-(pyridoxal phosphate)lysine is present on Lys229. 354-356 (SPF) is a binding site for (6S)-5,6,7,8-tetrahydrofolate.

The protein belongs to the SHMT family. In terms of assembly, homodimer. Requires pyridoxal 5'-phosphate as cofactor.

The protein localises to the cytoplasm. The enzyme catalyses (6R)-5,10-methylene-5,6,7,8-tetrahydrofolate + glycine + H2O = (6S)-5,6,7,8-tetrahydrofolate + L-serine. It functions in the pathway one-carbon metabolism; tetrahydrofolate interconversion. It participates in amino-acid biosynthesis; glycine biosynthesis; glycine from L-serine: step 1/1. In terms of biological role, catalyzes the reversible interconversion of serine and glycine with tetrahydrofolate (THF) serving as the one-carbon carrier. This reaction serves as the major source of one-carbon groups required for the biosynthesis of purines, thymidylate, methionine, and other important biomolecules. Also exhibits THF-independent aldolase activity toward beta-hydroxyamino acids, producing glycine and aldehydes, via a retro-aldol mechanism. The sequence is that of Serine hydroxymethyltransferase from Coxiella burnetii (strain CbuK_Q154) (Coxiella burnetii (strain Q154)).